The chain runs to 456 residues: UDP-N-acetylmuramate--L-alanine ligase (456 aa).

112-118 serves as a coordination point for ATP; the sequence is GTHGKTT.

The protein belongs to the MurCDEF family.

The protein resides in the cytoplasm. The enzyme catalyses UDP-N-acetyl-alpha-D-muramate + L-alanine + ATP = UDP-N-acetyl-alpha-D-muramoyl-L-alanine + ADP + phosphate + H(+). The protein operates within cell wall biogenesis; peptidoglycan biosynthesis. Functionally, cell wall formation. This chain is UDP-N-acetylmuramate--L-alanine ligase, found in Trichlorobacter lovleyi (strain ATCC BAA-1151 / DSM 17278 / SZ) (Geobacter lovleyi).